The primary structure comprises 145 residues: MERVAALGLDIGKKRVGVAGCDGTGLIATGLTTIIRSSFVADIPQFEAIVKERNIKILVAGLPYTMAGELGFQAQQVQKYAQKLAIALDLPLEYIDERCTSLEAEEFLKAKKQFSSWDKGAIDREAAAIILQQWLDRRRRVNTVV.

This sequence belongs to the YqgF nuclease family.

Its subcellular location is the cytoplasm. Functionally, could be a nuclease involved in processing of the 5'-end of pre-16S rRNA. The sequence is that of Putative pre-16S rRNA nuclease from Microcystis aeruginosa (strain NIES-843 / IAM M-2473).